Consider the following 62-residue polypeptide: Toxin Ct28 (62 aa).

The signal sequence occupies residues 1–22 (MKAFYGILIILLFCSMFKLNES). 3 cysteine pairs are disulfide-bonded: cysteine 29–cysteine 51, cysteine 35–cysteine 56, and cysteine 39–cysteine 58. Position 61 is an asparagine amide (asparagine 61).

Belongs to the short scorpion toxin superfamily. Potassium channel inhibitor family. Alpha-KTx 02 subfamily. As to expression, expressed by the venom gland.

Its subcellular location is the secreted. Its function is as follows. Blocks voltage-gated potassium channels. The chain is Toxin Ct28 from Centruroides tecomanus (Scorpion).